A 433-amino-acid polypeptide reads, in one-letter code: Shufflon protein C' (433 aa).

Positions 1–361 (MKKYDRGWAS…TGAILSCQSG (361 aa)) are constant region. The tract at residues 362 to 433 (RWSGGNKINY…HVDAYCCPFN (72 aa)) is variable region.

The protein is Shufflon protein C' of Escherichia coli.